A 457-amino-acid chain; its full sequence is Argininosuccinate lyase (457 aa).

It belongs to the lyase 1 family. Argininosuccinate lyase subfamily.

It localises to the cytoplasm. It catalyses the reaction 2-(N(omega)-L-arginino)succinate = fumarate + L-arginine. Its pathway is amino-acid biosynthesis; L-arginine biosynthesis; L-arginine from L-ornithine and carbamoyl phosphate: step 3/3. This chain is Argininosuccinate lyase, found in Escherichia coli O139:H28 (strain E24377A / ETEC).